We begin with the raw amino-acid sequence, 155 residues long: MAVYKIVELGDRILKERAKEVPKINQNIIKLLDNMAETMYHARGVGLAAPQIGVSKRVIVVDVGEGLLEMINPVITSCAGHETDSEGCLSIPGIVGDVTRASVIEVKGLDRRGKPLEVKAKGYLARALQHEIDHLDGILFIEKAKNIRKLVPKED.

Fe cation-binding residues include cysteine 88 and histidine 130. Residue glutamate 131 is part of the active site. A Fe cation-binding site is contributed by histidine 134.

Belongs to the polypeptide deformylase family. Fe(2+) serves as cofactor.

It catalyses the reaction N-terminal N-formyl-L-methionyl-[peptide] + H2O = N-terminal L-methionyl-[peptide] + formate. Removes the formyl group from the N-terminal Met of newly synthesized proteins. Requires at least a dipeptide for an efficient rate of reaction. N-terminal L-methionine is a prerequisite for activity but the enzyme has broad specificity at other positions. This is Peptide deformylase from Pelotomaculum thermopropionicum (strain DSM 13744 / JCM 10971 / SI).